A 669-amino-acid chain; its full sequence is MSKEIAKKRIEELRDLLNTFNYQYHVLDNPSVSDAEYDRNMQELIKLEAENPEFMSEDSPSVRVGGTVLDIFEKVTHKSPMLSLGNAFNEGDLRDFDRRVRQGIDDANVRYICELKIDGLAVSLHYEKGRFIQGATRGDGVTGEDITQNLKTIKAIPLRLNEEVTLEARGEAYMPKRSFVKLNEEKEQNGEDVFANPRNAAAGSIRQLDPKIAAKRNLSMFVYGLANVEEKTIPSHSESLDFLGELGFKTNPNRRTCETIEEVIAYVEEWQEKRPHLDYEIDGIVIKVDDVALQESLGTTAKSPRWAIAYKFPAEEVVTRLTGIELSVGRTGVVTPTAELEPVRVAGTIVRRASLHNEDLIREKDIRIGDYVVVKKAGDIIPEVVNVIFDKRTGEEEEYHMPTHCPACESELVRLEEEVALRCINPTCPAQIREGLIHFVSRNAMNIDGLGERVITQLFDADYIRTFADLYSLTKEQLLQLERFGEKSATNLVQAIENSKENSLERLLFGLGIRHVGAKAARTFAEHFETMDALVKATEEELKAINEIGEKMAQSVVAYFDNEDVLELLQQFKEYGVNMTYKGIKIADLQNVESYFAGKTVVLTGKLEVMGRSEAKKKIEALGGKVTGSVSKSTDLVVAGEAAGSKLAQAEKHNVEVWNEERFLQELNK.

NAD(+) is bound by residues 34–38, 83–84, and Glu-114; these read DAEYD and SL. Lys-116 serves as the catalytic N6-AMP-lysine intermediate. Positions 137, 171, 287, and 311 each coordinate NAD(+). The Zn(2+) site is built by Cys-405, Cys-408, Cys-423, and Cys-428. A BRCT domain is found at 591–669; sequence NVESYFAGKT…EERFLQELNK (79 aa).

Belongs to the NAD-dependent DNA ligase family. LigA subfamily. Requires Mg(2+) as cofactor. Mn(2+) is required as a cofactor.

The enzyme catalyses NAD(+) + (deoxyribonucleotide)n-3'-hydroxyl + 5'-phospho-(deoxyribonucleotide)m = (deoxyribonucleotide)n+m + AMP + beta-nicotinamide D-nucleotide.. Functionally, DNA ligase that catalyzes the formation of phosphodiester linkages between 5'-phosphoryl and 3'-hydroxyl groups in double-stranded DNA using NAD as a coenzyme and as the energy source for the reaction. It is essential for DNA replication and repair of damaged DNA. This is DNA ligase from Bacillus cereus (strain 03BB102).